The sequence spans 251 residues: Flap endonuclease Xni (251 aa).

Mg(2+) is bound at residue Asp104. The 90-residue stretch at 160 to 249 (VQPQQLPDYW…IDGNLQQLRL (90 aa)) folds into the 5'-3' exonuclease domain. The K(+) site is built by Leu171, Ala172, Pro180, Val182, and Ile185. Residues 184-189 (GIGPKS) form an interaction with DNA region.

It belongs to the Xni family. Mg(2+) is required as a cofactor. Requires K(+) as cofactor.

Functionally, has flap endonuclease activity. During DNA replication, flap endonucleases cleave the 5'-overhanging flap structure that is generated by displacement synthesis when DNA polymerase encounters the 5'-end of a downstream Okazaki fragment. The sequence is that of Flap endonuclease Xni from Escherichia coli O17:K52:H18 (strain UMN026 / ExPEC).